Consider the following 685-residue polypeptide: Twinkle mtDNA helicase (685 aa).

A mitochondrion-targeting transit peptide spans 1–31 (MWLLLRRAYPLRILLPLRGEWVGRRGLPRSL). The segment at 1 to 122 (MWLLLRRAYP…LCMTSLAEGS (122 aa)) is contributes to single strand DNA binding activity. Residues 54 to 214 (PVTTTEIRQY…LVFPWFTPGS (161 aa)) form an N-terminal region (NTR) region. The tract at residues 122-373 (SWEDLQASVE…WHKSIVSFRQ (252 aa)) is required for hexamers formation and DNA helicase activity. The interval 215 to 335 (SGLRGLKLLG…LNPKRCSLVR (121 aa)) is primase-like domain. The SF4 helicase domain occupies 385–636 (VEQAAGVRWS…LTFSIPPKSK (252 aa)). Residues 406-591 (HRKGELTVFT…QEADNVLILQ (186 aa)) are maybe required for stable oligomeric structure. 416–423 (GPTGSGKT) is a binding site for ATP. The stretch at 454-482 (RVMLTQFAVTRLEEQLDKYEEWADRFEDL) forms a coiled coil. The might negatively regulate ATPase activity stretch occupies residues 641–685 (KIKDDNGLVAKKSSSGKKGAAHQNPEICLGQDPSPAQPDTSKSSG). Residues 642–685 (IKDDNGLVAKKSSSGKKGAAHQNPEICLGQDPSPAQPDTSKSSG) are disordered.

Homohexamer (via C-terminus), which assembles in a ring-like structure. Homoheptamer, which assembles in a ring-like structure. Homooctamer, which assembles in a ring-like structure. Oligomers may sequentially eject two monomers (octamer&gt;heptamer&gt;hexamer) upon DNA binding. Oligomerization is Mg(2+), nucleotide and DNA-independent, however, Mg(2+) and nucleotide stabilize the homohexameric form. Interacts with POLG in vitro. Interacts with LONP1. Ubiquitous with the highest levels in the liver, heart and kidneys. The skeletal muscle, brain and testis showed lower but detectable expression. Expression is coregulated with MRPL43.

The protein localises to the mitochondrion matrix. It localises to the mitochondrion nucleoid. The protein resides in the mitochondrion inner membrane. The enzyme catalyses ATP + H2O = ADP + phosphate + H(+). The catalysed reaction is Couples ATP hydrolysis with the unwinding of duplex DNA at the replication fork by translocating in the 5'-3' direction. This creates two antiparallel DNA single strands (ssDNA). The leading ssDNA polymer is the template for DNA polymerase III holoenzyme which synthesizes a continuous strand.. Its function is as follows. Mitochondrial helicase involved in mtDNA replication and repair. Might have a role in mtDNA repair. Has DNA strand separation activity needed to form a processive replication fork for leading strand synthesis which is catalyzed by the formation of a replisome complex with POLG and mtSDB. Preferentially unwinds DNA substrates with pre-existing 5'-and 3'- single-stranded tails but is also active on a 5'- flap substrate. Can dissociate the invading strand of immobile or mobile D-loop DNA structures irrespective of the single strand polarity of the third strand. In addition to its DNA strand separation activity, also has DNA strand annealing, DNA strand-exchange and DNA branch migration activities. In Mus musculus (Mouse), this protein is Twinkle mtDNA helicase.